The sequence spans 494 residues: Homeotic protein bicoid (494 aa).

3 disordered regions span residues Met1–Phe49, Arg149–Met210, and Gln263–Gln293. A compositionally biased stretch (basic residues) spans Pro14–His40. A DNA-binding region (homeobox) is located at residues Pro97 to Ser156. A compositionally biased stretch (basic and acidic residues) spans Ile154 to Ser163. The segment at Arg433–Phe440 is RNA-binding.

It belongs to the paired homeobox family. Bicoid subfamily. In terms of assembly, interacts with Bin1; in vitro and yeast cells. Interacts with bin3. Maternal expression is an anterior cap concentrated in the cortical cytoplasm. Its transcript is produced maternally and sequestered near the anterior pole of the mature oocyte. After egg deposition, it is translated into protein, which diffuses toward the posterior, forming a long-range anterior gradient.

The protein resides in the nucleus. Functionally, segment polarity transcription factor that provides positional cues for the development of head and thoracic segments. Forms a protein concentration gradient that patterns the anterior-posterior axis during embryogenesis and promotes the expression of anterior gap genes, such as hunchback (hb), ocelliless (oc), and buttonhead (btd). Binds to regulatory DNA sequences containing a 5'-TAATCC-3' sequence motif. Also binds RNA. Interacts with Bin1 to repress transcription of bicoid target genes in the anterior tip of the embryo; a process known as retraction. This is Homeotic protein bicoid from Drosophila melanogaster (Fruit fly).